The sequence spans 199 residues: 7-methyl-GTP pyrophosphatase (199 aa).

The active-site Proton acceptor is the aspartate 76.

It belongs to the Maf family. YceF subfamily. Requires a divalent metal cation as cofactor.

It localises to the cytoplasm. It carries out the reaction N(7)-methyl-GTP + H2O = N(7)-methyl-GMP + diphosphate + H(+). Its function is as follows. Nucleoside triphosphate pyrophosphatase that hydrolyzes 7-methyl-GTP (m(7)GTP). May have a dual role in cell division arrest and in preventing the incorporation of modified nucleotides into cellular nucleic acids. This chain is 7-methyl-GTP pyrophosphatase, found in Rhizobium johnstonii (strain DSM 114642 / LMG 32736 / 3841) (Rhizobium leguminosarum bv. viciae).